The primary structure comprises 1946 residues: Chromodomain-helicase-DNA-binding protein 5 (1946 aa).

Disordered stretches follow at residues 1–140, 236–272, and 285–340; these read MRGP…SGQL, VPQT…GRGK, and SKRK…GDGY. 2 stretches are compositionally biased toward acidic residues: residues 17 to 37 and 72 to 90; these read EEME…EGFE and NDEM…ESEG. 2 stretches are compositionally biased toward basic residues: residues 96 to 118 and 254 to 272; these read TKKK…KRKK and GVRK…GRGK. The segment covering 293–303 has biased composition (acidic residues); it reads SEEDEREDSDL. Over residues 323-332 the composition is skewed to basic residues; that stretch reads KKNKRRRKKK. 2 consecutive PHD-type zinc fingers follow at residues 345–392 and 418–465; these read QDYC…CEKE and MEFC…CTCP. The interval 345–655 is histone-binding; sequence QDYCEVCQQG…HRELMLGEDA (311 aa). The 58-residue stretch at 499–556 folds into the Chromo 1 domain; it reads MPPPRPLEGIPEREFFVKWAGLSYWHCSWVKELQLELYHTVMYRNYQRKNDMDEPPPF. The tract at residues 551–573 is disordered; the sequence is DEPPPFDYGSGDEDGKSEKRKNK. The span at 563 to 573 shows a compositional bias: basic and acidic residues; sequence EDGKSEKRKNK. A Chromo 2 domain is found at 594–655; sequence MMVHRILNHS…HRELMLGEDA (62 aa). Positions 714–898 constitute a Helicase ATP-binding domain; that stretch reads RFSWAQGTDT…FHLLNFLTPE (185 aa). Residue 727 to 734 coordinates ATP; it reads DEMGLGKT. The DEAH box signature appears at 849–852; the sequence is DEAH. In terms of domain architecture, Helicase C-terminal spans 1030–1195; the sequence is LLQKMLKKLR…MTKQELDDIL (166 aa). 5 disordered regions span residues 1210-1254, 1353-1413, 1525-1566, 1579-1696, and 1926-1946; these read MMSQ…VEDS, YNDA…LPPL, KYST…APLG, DEKE…EDKN, and SFPA…LQPF. Polar residues predominate over residues 1212-1230; that stretch reads SQGQRPTTPIPDIQSTKGG. 2 stretches are compositionally biased toward acidic residues: residues 1357-1368 and 1378-1387; these read SQEDQEWQDELS and SEDEDEDFEE. Gln-1392 is subject to N5-methylglutamine. Residues 1551-1564 are compositionally biased toward pro residues; sequence TPVPASPAQLPPAP. Phosphoserine is present on Ser-1556. 3 stretches are compositionally biased toward basic and acidic residues: residues 1602–1629, 1637–1654, and 1661–1676; these read DRVE…EVEK, PLKE…DKPE, and GDFR…KEPG.

It belongs to the SNF2/RAD54 helicase family. As to quaternary structure, component of the nucleosome remodeling and deacetylase (NuRD) repressor complex, composed of core proteins MTA1, MTA2, MTA3, RBBP4, RBBP7, HDAC1, HDAC2, MBD2, MBD3, and peripherally associated proteins CDK2AP1, CDK2AP2, GATAD2A, GATAD2B, CHD3, CHD4 and CHD5. The exact stoichiometry of the NuRD complex is unknown, and some subunits such as MBD2 and MBD3, GATAD2A and GATAD2B, and CHD3, CHD4 and CHD5 define mutually exclusive NuRD complexes. Interacts with HDAC2. In terms of processing, methylated at Gln-1392 by N6AMT1. As to expression, specifically expressed by neurons in brain, retina and adrenal gland (at protein level). Also detected in testis.

The protein resides in the nucleus. The protein localises to the chromosome. The catalysed reaction is ATP + H2O = ADP + phosphate + H(+). ATP-dependent chromatin-remodeling factor that binds DNA through histones and regulates gene transcription. May specifically recognize and bind trimethylated 'Lys-27' (H3K27me3) and non-methylated 'Lys-4' of histone H3. Acts as a component of the histone deacetylase NuRD complex which participates in the remodeling of chromatin. Plays a role in the development of the nervous system by activating the expression of genes promoting neuron terminal differentiation. In parallel, it may also positively regulate the trimethylation of histone H3 at 'Lys-27' thereby specifically repressing genes that promote the differentiation into non-neuronal cell lineages. Regulates the expression of genes involved in cell proliferation and differentiation. Downstream activated genes may include CDKN2A that positively regulates the p53/TP53 pathway, which in turn, prevents cell proliferation. In spermatogenesis, it probably regulates histone hyperacetylation and the replacement of histones by transition proteins in chromatin, a crucial step in the condensation of spermatid chromatin and the production of functional spermatozoa. This is Chromodomain-helicase-DNA-binding protein 5 (Chd5) from Mus musculus (Mouse).